Consider the following 441-residue polypeptide: Probable D-serine dehydratase (441 aa).

K101 is subject to N6-(pyridoxal phosphate)lysine.

Belongs to the serine/threonine dehydratase family. DsdA subfamily. It depends on pyridoxal 5'-phosphate as a cofactor.

The catalysed reaction is D-serine = pyruvate + NH4(+). The polypeptide is Probable D-serine dehydratase (Geobacillus kaustophilus (strain HTA426)).